Consider the following 66-residue polypeptide: Photosystem II reaction center protein J (66 aa).

The disordered stretch occupies residues Met-1–Pro-25. Residues Leu-37–Tyr-57 traverse the membrane as a helical segment.

This sequence belongs to the PsbJ family. In terms of assembly, PSII is composed of 1 copy each of membrane proteins PsbA, PsbB, PsbC, PsbD, PsbE, PsbF, PsbH, PsbI, PsbJ, PsbK, PsbL, PsbM, PsbT, PsbX, PsbY, PsbZ, Psb30/Ycf12, peripheral proteins PsbO, CyanoQ (PsbQ), PsbU, PsbV and a large number of cofactors. It forms dimeric complexes.

It localises to the cellular thylakoid membrane. In terms of biological role, one of the components of the core complex of photosystem II (PSII). PSII is a light-driven water:plastoquinone oxidoreductase that uses light energy to abstract electrons from H(2)O, generating O(2) and a proton gradient subsequently used for ATP formation. It consists of a core antenna complex that captures photons, and an electron transfer chain that converts photonic excitation into a charge separation. The protein is Photosystem II reaction center protein J of Synechococcus sp. (strain CC9605).